A 245-amino-acid polypeptide reads, in one-letter code: Epoxyqueuosine reductase QueH (245 aa).

[4Fe-4S] cluster-binding residues include cysteine 52, cysteine 53, cysteine 131, and cysteine 134. An intrachain disulfide couples cysteine 214 to cysteine 216.

It belongs to the QueH family.

It carries out the reaction epoxyqueuosine(34) in tRNA + AH2 = queuosine(34) in tRNA + A + H2O. It participates in tRNA modification; tRNA-queuosine biosynthesis. Its function is as follows. Catalyzes the conversion of epoxyqueuosine (oQ) to queuosine (Q), which is a hypermodified base found in the wobble positions of tRNA(Asp), tRNA(Asn), tRNA(His) and tRNA(Tyr). The chain is Epoxyqueuosine reductase QueH from Haemophilus influenzae (strain ATCC 51907 / DSM 11121 / KW20 / Rd).